The following is a 593-amino-acid chain: Mitosis inducer protein kinase cdr1 (593 aa).

One can recognise a Protein kinase domain in the interval Trp12–Leu258. Residues Leu18 to Val26 and Lys41 contribute to the ATP site. Asp128 acts as the Proton acceptor in catalysis. A Phosphoserine modification is found at Ser550.

The protein belongs to the protein kinase superfamily. CAMK Ser/Thr protein kinase family. NIM1 subfamily. In terms of assembly, interacts with msp1.

The catalysed reaction is L-seryl-[protein] + ATP = O-phospho-L-seryl-[protein] + ADP + H(+). It catalyses the reaction L-threonyl-[protein] + ATP = O-phospho-L-threonyl-[protein] + ADP + H(+). Functionally, this protein, a dose-dependent mitotic inducer, appears to function as a negative regulator of mitosis inhibitor wee1 by phosphorylating and inactivating it. This chain is Mitosis inducer protein kinase cdr1 (cdr1), found in Schizosaccharomyces pombe (strain 972 / ATCC 24843) (Fission yeast).